We begin with the raw amino-acid sequence, 226 residues long: Phosphoglycolate phosphatase (226 aa).

Aspartate 10 functions as the Nucleophile in the catalytic mechanism. Positions 10, 12, and 175 each coordinate Mg(2+).

The protein belongs to the HAD-like hydrolase superfamily. CbbY/CbbZ/Gph/YieH family. It depends on Mg(2+) as a cofactor.

The enzyme catalyses 2-phosphoglycolate + H2O = glycolate + phosphate. Its pathway is organic acid metabolism; glycolate biosynthesis; glycolate from 2-phosphoglycolate: step 1/1. In terms of biological role, specifically catalyzes the dephosphorylation of 2-phosphoglycolate. Is involved in the dissimilation of the intracellular 2-phosphoglycolate formed during the DNA repair of 3'-phosphoglycolate ends, a major class of DNA lesions induced by oxidative stress. The chain is Phosphoglycolate phosphatase from Vibrio cholerae serotype O1 (strain ATCC 39315 / El Tor Inaba N16961).